The primary structure comprises 1082 residues: Error-prone DNA polymerase (1082 aa).

The protein belongs to the DNA polymerase type-C family. DnaE2 subfamily.

The protein resides in the cytoplasm. The catalysed reaction is DNA(n) + a 2'-deoxyribonucleoside 5'-triphosphate = DNA(n+1) + diphosphate. Its function is as follows. DNA polymerase involved in damage-induced mutagenesis and translesion synthesis (TLS). It is not the major replicative DNA polymerase. The chain is Error-prone DNA polymerase from Xanthomonas campestris pv. campestris (strain 8004).